A 111-amino-acid chain; its full sequence is Transcription factor S (111 aa).

Residues Cys-4, Cys-7, Cys-24, Cys-27, Cys-72, Cys-75, Cys-100, and Cys-103 each contribute to the Zn(2+) site. The C4-type zinc finger occupies Cys-4–Cys-27. The segment at Arg-68 to Arg-108 adopts a TFIIS-type zinc-finger fold.

The protein belongs to the archaeal RpoM/eukaryotic RPA12/RPB9/RPC11 RNA polymerase family.

Functionally, induces RNA cleavage activity in the RNA polymerase. In its presence, the cleavage activity of the RNA polymerase truncates the RNA back to position +15 in a stepwise manner by releasing mainly dinucleotides from the 3'-end of the nascent RNA. The truncated RNAs are able to continue elongation. Involved in transcriptional proofreading and fidelity. Misincorporation of nucleotides during elongation of transcription leads to arrested elongation complexes which are rescued by TFS-promoted removal of a dinucleotide from the 3'-end. TFS is able to induce a cleavage resynthesis cycle in stalled elongation complexes (resulting from the next missing nucleotide or a reduced incorporation rate of a wrong nucleotide) preventing misincorporation and enabling proofreading in a post-incorporation manner. Pausing of elongation complexes is the main determinant of TFS-induced RNA cleavage. The protein is Transcription factor S of Sulfolobus acidocaldarius (strain ATCC 33909 / DSM 639 / JCM 8929 / NBRC 15157 / NCIMB 11770).